The sequence spans 146 residues: 3-dehydroquinate dehydratase (146 aa).

Tyr-24 (proton acceptor) is an active-site residue. Substrate-binding residues include Asn-73, His-79, and Asp-86. Catalysis depends on His-99, which acts as the Proton donor. Substrate contacts are provided by residues Leu-100 to Ser-101 and Arg-110.

This sequence belongs to the type-II 3-dehydroquinase family. Homododecamer.

The enzyme catalyses 3-dehydroquinate = 3-dehydroshikimate + H2O. Its pathway is metabolic intermediate biosynthesis; chorismate biosynthesis; chorismate from D-erythrose 4-phosphate and phosphoenolpyruvate: step 3/7. In terms of biological role, catalyzes a trans-dehydration via an enolate intermediate. The polypeptide is 3-dehydroquinate dehydratase (Shewanella oneidensis (strain ATCC 700550 / JCM 31522 / CIP 106686 / LMG 19005 / NCIMB 14063 / MR-1)).